The following is a 567-amino-acid chain: Oxygen-dependent choline dehydrogenase (567 aa).

Position 4–33 (4–33 (DYIIIGAGSAGNVLAARLTEDADVTVLLLE)) interacts with FAD. Histidine 473 acts as the Proton acceptor in catalysis.

It belongs to the GMC oxidoreductase family. It depends on FAD as a cofactor.

It catalyses the reaction choline + A = betaine aldehyde + AH2. It carries out the reaction betaine aldehyde + NAD(+) + H2O = glycine betaine + NADH + 2 H(+). The protein operates within amine and polyamine biosynthesis; betaine biosynthesis via choline pathway; betaine aldehyde from choline (cytochrome c reductase route): step 1/1. In terms of biological role, involved in the biosynthesis of the osmoprotectant glycine betaine. Catalyzes the oxidation of choline to betaine aldehyde and betaine aldehyde to glycine betaine at the same rate. This chain is Oxygen-dependent choline dehydrogenase, found in Yersinia pseudotuberculosis serotype IB (strain PB1/+).